The primary structure comprises 880 residues: uncharacterized protein (880 aa).

Disordered regions lie at residues 101 to 149 (KPIP…LRSE), 191 to 224 (PETS…ISTH), 240 to 273 (TTTT…PILK), 294 to 350 (NSNS…STTS), 425 to 446 (QPDS…ESQP), 470 to 508 (STST…SSSS), 536 to 561 (MESS…NDNS), 580 to 613 (APQS…NDDE), 682 to 713 (NTNT…NINN), and 844 to 880 (NSSG…KSEI). Residues 113–147 (ISIKEKEKEKEKEKEKEKEKEKEKEKEMKSTINLR) adopt a coiled-coil conformation. The span at 115-149 (IKEKEKEKEKEKEKEKEKEKEKEKEMKSTINLRSE) shows a compositional bias: basic and acidic residues. 2 stretches are compositionally biased toward low complexity: residues 193 to 223 (TSTP…SIST) and 240 to 256 (TTTT…PSSS). Over residues 257–271 (IAGITNPTSRSSSPI) the composition is skewed to polar residues. Over residues 294-332 (NSNSSSGGGNNNNKSISTPSSPIISRPITNKINNNNNNN) the composition is skewed to low complexity. The span at 333 to 342 (QPQLHYNQPQ) shows a compositional bias: polar residues. Positions 536 to 548 (MESSTTTTLLSEN) are enriched in low complexity. The span at 589-613 (QPEDDPFFDFEDLSDDDDSNDNDDE) shows a compositional bias: acidic residues. The span at 844–864 (NSSGSGNNSNDNSGSSSPSSS) shows a compositional bias: low complexity. A compositionally biased stretch (polar residues) spans 865-880 (KTNTLNQQSICIKSEI).

This is an uncharacterized protein from Dictyostelium discoideum (Social amoeba).